Reading from the N-terminus, the 443-residue chain is Exodeoxyribonuclease 7 large subunit (443 aa).

This sequence belongs to the XseA family. In terms of assembly, heterooligomer composed of large and small subunits.

The protein resides in the cytoplasm. The catalysed reaction is Exonucleolytic cleavage in either 5'- to 3'- or 3'- to 5'-direction to yield nucleoside 5'-phosphates.. Functionally, bidirectionally degrades single-stranded DNA into large acid-insoluble oligonucleotides, which are then degraded further into small acid-soluble oligonucleotides. This is Exodeoxyribonuclease 7 large subunit from Legionella pneumophila (strain Lens).